Consider the following 633-residue polypeptide: Dynein axonemal assembly factor 1 (633 aa).

Residues 1-80 (MHPEASEPPV…SRDDRDDRGP (80 aa)) are disordered. A compositionally biased stretch (basic and acidic residues) spans 22–42 (AGDHGDAGPGVRKEEINETKE). The span at 46–60 (GPCTTSCQSQQQPSG) shows a compositional bias: low complexity. Residues 70-80 (HSRDDRDDRGP) are compositionally biased toward basic and acidic residues. LRR repeat units follow at residues 101 to 123 (ALNDTLYLHFKGFDRIENLEEYT), 124 to 145 (GLRCLWLECNGIQRIENLQAQS), 146 to 167 (ELRCLFLQVNLLHKIENLEPLQ), 168 to 189 (KLDALNLSNNYIKTIENLSCLP), 190 to 211 (VLNTLQMAHNRLETVADIEHLR), and 215 to 236 (QLCVLDLSHNSLSDPEILSVLE). An LRRCT domain is found at 249 to 288 (NPVTKHIPNYRRTVTVRLKHLTYLDDRPVFPKDRACAEAW). The span at 326 to 344 (EERKKARDRGETPLPESEK) shows a compositional bias: basic and acidic residues. Disordered stretches follow at residues 326 to 364 (EERKKARDRGETPLPESEKSIPTSPEAQEKPPKGETQQK) and 404 to 436 (LSGNLAHTQTPVVVTPEEVTSPVEATDGARTED). At Ser349 the chain carries Phosphoserine. Over residues 352–364 (AQEKPPKGETQQK) the composition is skewed to basic and acidic residues. Residues 413–427 (TPVVVTPEEVTSPVE) show a composition bias toward low complexity. At Thr462 the chain carries Phosphothreonine. Ser465 and Ser488 each carry phosphoserine. 2 stretches are compositionally biased toward polar residues: residues 538–555 (TTDLETQSQDPSTASSHP) and 568–592 (GESNQPLPPQSCASDPTLAQSSEGG). The segment at 538 to 633 (TTDLETQSQD…GLEDIEFGLD (96 aa)) is disordered.

The protein belongs to the DNAAF1 family.

The protein resides in the cell projection. It is found in the cilium. Its function is as follows. Cilium-specific protein required for the stability of the ciliary architecture. Plays a role in cytoplasmic preassembly of dynein arms. Involved in regulation of microtubule-based cilia and actin-based brush border microvilli. The chain is Dynein axonemal assembly factor 1 (Dnaaf1) from Rattus norvegicus (Rat).